Here is a 177-residue protein sequence, read N- to C-terminus: Coatomer subunit zeta-3 (177 aa).

The protein belongs to the adaptor complexes small subunit family. As to quaternary structure, oligomeric complex that consists of at least the alpha, beta, beta', gamma, delta, epsilon and zeta subunits.

The protein resides in the cytoplasm. The protein localises to the golgi apparatus membrane. It localises to the cytoplasmic vesicle. It is found in the COPI-coated vesicle membrane. Its function is as follows. The coatomer is a cytosolic protein complex that binds to dilysine motifs and reversibly associates with Golgi non-clathrin-coated vesicles, which further mediate biosynthetic protein transport from the ER, via the Golgi up to the trans Golgi network. Coatomer complex is required for budding from Golgi membranes, and is essential for the retrograde Golgi-to-ER transport of dilysine-tagged proteins. The zeta subunit may be involved in regulating the coat assembly and, hence, the rate of biosynthetic protein transport due to its association-dissociation properties with the coatomer complex. The protein is Coatomer subunit zeta-3 of Oryza sativa subsp. japonica (Rice).